A 485-amino-acid polypeptide reads, in one-letter code: Glutamyl-tRNA(Gln) amidotransferase subunit A (485 aa).

Active-site charge relay system residues include K79 and S154. S178 (acyl-ester intermediate) is an active-site residue.

Belongs to the amidase family. GatA subfamily. In terms of assembly, heterotrimer of A, B and C subunits.

The catalysed reaction is L-glutamyl-tRNA(Gln) + L-glutamine + ATP + H2O = L-glutaminyl-tRNA(Gln) + L-glutamate + ADP + phosphate + H(+). Its function is as follows. Allows the formation of correctly charged Gln-tRNA(Gln) through the transamidation of misacylated Glu-tRNA(Gln) in organisms which lack glutaminyl-tRNA synthetase. The reaction takes place in the presence of glutamine and ATP through an activated gamma-phospho-Glu-tRNA(Gln). This is Glutamyl-tRNA(Gln) amidotransferase subunit A from Clostridium botulinum (strain Langeland / NCTC 10281 / Type F).